The primary structure comprises 309 residues: Methionyl-tRNA formyltransferase (309 aa).

A (6S)-5,6,7,8-tetrahydrofolate-binding site is contributed by 112–115 (SLLP).

Belongs to the Fmt family.

The catalysed reaction is L-methionyl-tRNA(fMet) + (6R)-10-formyltetrahydrofolate = N-formyl-L-methionyl-tRNA(fMet) + (6S)-5,6,7,8-tetrahydrofolate + H(+). Attaches a formyl group to the free amino group of methionyl-tRNA(fMet). The formyl group appears to play a dual role in the initiator identity of N-formylmethionyl-tRNA by promoting its recognition by IF2 and preventing the misappropriation of this tRNA by the elongation apparatus. In Bartonella quintana (strain Toulouse) (Rochalimaea quintana), this protein is Methionyl-tRNA formyltransferase.